Reading from the N-terminus, the 1461-residue chain is Periaxin (1461 aa).

Ser7 is modified (phosphoserine). In terms of domain architecture, PDZ spans 16–99; the sequence is LVEIIVETEA…YKVSFCLKRT (84 aa). Positions 70 to 84 match the Nuclear export signal motif; sequence VFFENFKYEDALRLL. The short motif at 118-196 is the Nuclear localization signal element; that stretch reads KGPRAKVAKL…RLQLPRLRVR (79 aa). Ser133 bears the Phosphoserine mark. 55 consecutive repeat copies span residues 431 to 435, 439 to 443, 447 to 451, 455 to 459, 463 to 467, 468 to 472, 473 to 477, 481 to 485, 486 to 490, 494 to 498, 499 to 503, 507 to 511, 512 to 516, 520 to 524, 525 to 529, 533 to 537, 538 to 542, 546 to 550, 551 to 555, 559 to 563, 564 to 568, 572 to 576, 577 to 581, 582 to 586, 590 to 594, 595 to 599, 600 to 604, 608 to 612, 613 to 617, 618 to 622, 626 to 630, 631 to 635, 636 to 640, 644 to 648, 649 to 653, 654 to 658, 662 to 666, 670 to 674, 675 to 679, 683 to 687, 688 to 692, 696 to 700, 701 to 705, 706 to 710, 714 to 718, 719 to 723, 724 to 728, 732 to 736, 737 to 741, 742 to 746, 750 to 754, 755 to 759, 760 to 764, 771 to 775, and 779 to 783. The interval 431–783 is 55 X 5 AA approximate tandem repeats of [LVMAG]-[PSREQC]-[EDKL]-[LIVMAP]-[AQKHRPE]; that may have a tripeptide spacer of [LV]-P-[KER]; that stretch reads GPEVKVPKGP…VKLPRAPEVQ (353 aa). Residues Ser900 and Ser1082 each carry the phosphoserine modification. Residues 1318-1327 show a composition bias toward basic and acidic residues; it reads EGAEEGEKAK. The segment at 1318–1461 is disordered; sequence EGAEEGEKAK…RMEGAQAAAV (144 aa). Phosphoserine occurs at positions 1349, 1351, 1363, 1401, 1407, and 1439. Residues 1352 to 1363 show a composition bias toward acidic residues; the sequence is PEEEEEEEEEGS.

It belongs to the periaxin family. In terms of assembly, homodimer (via PDZ domain). Interacts with SCN10A. Found in a complex with SCN10A. Interacts with DRP2. Identified in a dystroglycan complex that contains at least PRX, DRP2, UTRN, DMD and DAG1. Detected in a complex composed of at least EZR, AHNAK, PPL and PRX. Identified in a complex with EZR, AHNAK, BFSP1, BFSP2, ANK2, PLEC, VIM and spectrin. In terms of tissue distribution, detected in spinal cord. Isoform 1 and isoform 2 are found in sciatic nerve and Schwann cells.

It is found in the cell membrane. Its subcellular location is the nucleus. The protein localises to the cytoplasm. The protein resides in the cell junction. In terms of biological role, scaffolding protein that functions as part of a dystroglycan complex in Schwann cells, and as part of EZR and AHNAK-containing complexes in eye lens fiber cells. Required for the maintenance of the peripheral myelin sheath that is essential for normal transmission of nerve impulses and normal perception of sensory stimuli. Required for normal transport of MBP mRNA from the perinuclear to the paranodal regions. Required for normal remyelination after nerve injury. Required for normal elongation of Schwann cells and normal length of the internodes between the nodes of Ranvier. The demyelinated nodes of Ranvier permit saltatory transmission of nerve impulses; shorter internodes cause slower transmission of nerve impulses. Required for the formation of appositions between the abaxonal surface of the myelin sheath and the Schwann cell plasma membrane; the Schwann cell cytoplasm is restricted to regions between these appositions. Required for the formation of Cajal bands and of Schmidt-Lanterman incisures that correspond to short, cytoplasm-filled regions on myelinated nerves. Recruits DRP2 to the Schwann cell plasma membrane. Required for normal protein composition of the eye lens fiber cell plasma membrane and normal eye lens fiber cell morphology. The chain is Periaxin (PRX) from Homo sapiens (Human).